Reading from the N-terminus, the 253-residue chain is uncharacterized protein (253 aa).

A disordered region spans residues 211-241 (TTRRKRYREDRDSGEDLGAESKRGNGSVRYT).

This is an uncharacterized protein from Ictalurid herpesvirus 1 (strain Auburn) (IcHV-1).